The primary structure comprises 465 residues: Ribulose bisphosphate carboxylase large chain (465 aa).

K4 carries the N6,N6,N6-trimethyllysine modification. Residues N113 and T163 each coordinate substrate. K165 acts as the Proton acceptor in catalysis. K167 provides a ligand contact to substrate. Positions 191, 193, and 194 each coordinate Mg(2+). K191 is modified (N6-carboxylysine). Catalysis depends on H284, which acts as the Proton acceptor. R285, H317, and S369 together coordinate substrate.

Belongs to the RuBisCO large chain family. Type I subfamily. Heterohexadecamer of 8 large chains and 8 small chains; disulfide-linked. The disulfide link is formed within the large subunit homodimers. Mg(2+) is required as a cofactor. Post-translationally, the disulfide bond which can form in the large chain dimeric partners within the hexadecamer appears to be associated with oxidative stress and protein turnover.

Its subcellular location is the plastid. The protein localises to the chloroplast. It catalyses the reaction 2 (2R)-3-phosphoglycerate + 2 H(+) = D-ribulose 1,5-bisphosphate + CO2 + H2O. It carries out the reaction D-ribulose 1,5-bisphosphate + O2 = 2-phosphoglycolate + (2R)-3-phosphoglycerate + 2 H(+). In terms of biological role, ruBisCO catalyzes two reactions: the carboxylation of D-ribulose 1,5-bisphosphate, the primary event in carbon dioxide fixation, as well as the oxidative fragmentation of the pentose substrate in the photorespiration process. Both reactions occur simultaneously and in competition at the same active site. The polypeptide is Ribulose bisphosphate carboxylase large chain (Acer saccharum (Sugar maple)).